We begin with the raw amino-acid sequence, 556 residues long: 2-isopropylmalate synthase (556 aa).

The 275-residue stretch at 33-307 (PIWLSTDLRD…DPQLDFSDID (275 aa)) folds into the Pyruvate carboxyltransferase domain. Residues D42, H246, H248, and N282 each contribute to the Mg(2+) site. Positions 439–556 (ASAPYALKGH…ALSQAESRAA (118 aa)) are regulatory domain.

The protein belongs to the alpha-IPM synthase/homocitrate synthase family. LeuA type 2 subfamily. Homodimer. Mg(2+) serves as cofactor.

The protein localises to the cytoplasm. The enzyme catalyses 3-methyl-2-oxobutanoate + acetyl-CoA + H2O = (2S)-2-isopropylmalate + CoA + H(+). It functions in the pathway amino-acid biosynthesis; L-leucine biosynthesis; L-leucine from 3-methyl-2-oxobutanoate: step 1/4. Functionally, catalyzes the condensation of the acetyl group of acetyl-CoA with 3-methyl-2-oxobutanoate (2-ketoisovalerate) to form 3-carboxy-3-hydroxy-4-methylpentanoate (2-isopropylmalate). This chain is 2-isopropylmalate synthase, found in Ectopseudomonas mendocina (strain ymp) (Pseudomonas mendocina).